A 363-amino-acid chain; its full sequence is Fructose-1,6-bisphosphatase 1 (363 aa).

V2 carries the post-translational modification N-acetylvaline. AMP contacts are provided by residues 18 to 22 and 28 to 32; these read VLEEG and TGEMT. Mg(2+) is bound by residues D69 and E98. 113 to 114 contributes to the AMP binding site; sequence KY. Mg(2+) is bound by residues D119, L121, and D122. 122-125 is a binding site for substrate; that stretch reads DGSS. Position 141 (R141) interacts with AMP. K151 is subject to N6-succinyllysine. Substrate contacts are provided by residues 213 to 216, 244 to 249, Y265, and 275 to 277; these read NEGY, RYVGSM, and KLR. Phosphotyrosine occurs at positions 216, 245, and 265. Residue E281 participates in Mg(2+) binding. A phosphoserine mark is found at S339 and S353.

It belongs to the FBPase class 1 family. Homotetramer. Mg(2+) serves as cofactor.

The enzyme catalyses beta-D-fructose 1,6-bisphosphate + H2O = beta-D-fructose 6-phosphate + phosphate. It functions in the pathway carbohydrate biosynthesis; gluconeogenesis. Subject to complex allosteric regulation. The enzyme can assume an active R-state, or an inactive T-state. Intermediate conformations may exist. AMP acts as an allosteric inhibitor. AMP binding affects the turnover of bound substrate and not the affinity for substrate. Fructose 2,6-bisphosphate acts as a competitive inhibitor. Fructose 2,6-bisphosphate and AMP have synergistic effects. Catalyzes the hydrolysis of fructose 1,6-bisphosphate to fructose 6-phosphate in the presence of divalent cations, acting as a rate-limiting enzyme in gluconeogenesis. Plays a role in regulating glucose sensing and insulin secretion of pancreatic beta-cells. Appears to modulate glycerol gluconeogenesis in liver. Important regulator of appetite and adiposity; increased expression of the protein in liver after nutrient excess increases circulating satiety hormones and reduces appetite-stimulating neuropeptides and thus seems to provide a feedback mechanism to limit weight gain. The protein is Fructose-1,6-bisphosphatase 1 (Fbp1) of Rattus norvegicus (Rat).